The primary structure comprises 348 residues: Ketol-acid reductoisomerase (NADP(+)) (348 aa).

Residues 2–182 enclose the KARI N-terminal Rossmann domain; the sequence is AKTYYDHDAD…GCTRAGVLET (181 aa). NADP(+)-binding positions include 25-28, serine 51, serine 53, and 83-86; these read YGSQ and DTAQ. Histidine 108 is a catalytic residue. An NADP(+)-binding site is contributed by glycine 134. The 146-residue stretch at 183 to 328 folds into the KARI C-terminal knotted domain; sequence TFKEETETDL…EKLRAAMPFL (146 aa). Mg(2+) is bound by residues aspartate 191, glutamate 195, glutamate 227, and glutamate 231. Serine 252 is a binding site for substrate.

The protein belongs to the ketol-acid reductoisomerase family. It depends on Mg(2+) as a cofactor.

It catalyses the reaction (2R)-2,3-dihydroxy-3-methylbutanoate + NADP(+) = (2S)-2-acetolactate + NADPH + H(+). The enzyme catalyses (2R,3R)-2,3-dihydroxy-3-methylpentanoate + NADP(+) = (S)-2-ethyl-2-hydroxy-3-oxobutanoate + NADPH + H(+). It participates in amino-acid biosynthesis; L-isoleucine biosynthesis; L-isoleucine from 2-oxobutanoate: step 2/4. It functions in the pathway amino-acid biosynthesis; L-valine biosynthesis; L-valine from pyruvate: step 2/4. In terms of biological role, involved in the biosynthesis of branched-chain amino acids (BCAA). Catalyzes an alkyl-migration followed by a ketol-acid reduction of (S)-2-acetolactate (S2AL) to yield (R)-2,3-dihydroxy-isovalerate. In the isomerase reaction, S2AL is rearranged via a Mg-dependent methyl migration to produce 3-hydroxy-3-methyl-2-ketobutyrate (HMKB). In the reductase reaction, this 2-ketoacid undergoes a metal-dependent reduction by NADPH to yield (R)-2,3-dihydroxy-isovalerate. The polypeptide is Ketol-acid reductoisomerase (NADP(+)) (Acidobacterium capsulatum (strain ATCC 51196 / DSM 11244 / BCRC 80197 / JCM 7670 / NBRC 15755 / NCIMB 13165 / 161)).